The following is a 457-amino-acid chain: Cyanidin 3-O-galactoside 2''-O-xylosyltransferase FGGT1 (457 aa).

Belongs to the UDP-glycosyltransferase family. As to expression, expressed in ovaries.

It catalyses the reaction cyanidin 3-O-beta-D-galactoside + UDP-alpha-D-xylose = cyanidin 3-O-[beta-D-xylosyl-(1-&gt;2)-beta-D-galactoside] + UDP + H(+). Its pathway is pigment biosynthesis; anthocyanin biosynthesis. Xylosyltransferase involved in anthocyanin biosynthesis by catalyzing the xylosylation of cyanidin 3-O-galactoside to form cyanidin 3-O-[2-O-(-xylosyl)-galactoside]. Required for the accumulation of anthocyanin in red-fleshed kiwifruit varieties. The protein is Cyanidin 3-O-galactoside 2''-O-xylosyltransferase FGGT1 of Actinidia chinensis var. chinensis (Chinese soft-hair kiwi).